The sequence spans 174 residues: Adenylate kinase (174 aa).

The tract at residues 12–41 is NMP; sequence STGDMLRAAIKAGTPLGLEAKKIIDEGGLV. Residues threonine 13, arginine 18, 39 to 41, 67 to 70, and glutamine 74 each bind AMP; these read GLV and GFPR. The tract at residues 104–141 is LID; the sequence is GRRVHLASGRTYHIAYNPPKVEGKDDVTGEDLIQRDDD. ATP-binding positions include arginine 105 and 114–115; that span reads TY. Positions 138 and 149 each coordinate AMP.

This sequence belongs to the adenylate kinase family. Monomer.

Its subcellular location is the cytoplasm. It catalyses the reaction AMP + ATP = 2 ADP. It functions in the pathway purine metabolism; AMP biosynthesis via salvage pathway; AMP from ADP: step 1/1. In terms of biological role, catalyzes the reversible transfer of the terminal phosphate group between ATP and AMP. Plays an important role in cellular energy homeostasis and in adenine nucleotide metabolism. The protein is Adenylate kinase of Neisseria animalis.